The primary structure comprises 236 residues: uncharacterized protein (236 aa).

The protein resides in the plastid. The protein localises to the chloroplast. This is an uncharacterized protein from Chlorella vulgaris (Green alga).